A 476-amino-acid chain; its full sequence is Glutamate--tRNA ligase 1 (476 aa).

The 'HIGH' region motif lies at 9–19; sequence PSPTGFLHIGG. The short motif at 238-242 is the 'KMSKS' region element; it reads KLSKR. Lysine 241 contributes to the ATP binding site.

This sequence belongs to the class-I aminoacyl-tRNA synthetase family. Glutamate--tRNA ligase type 1 subfamily. Monomer.

The protein localises to the cytoplasm. It catalyses the reaction tRNA(Glu) + L-glutamate + ATP = L-glutamyl-tRNA(Glu) + AMP + diphosphate. Catalyzes the attachment of glutamate to tRNA(Glu) in a two-step reaction: glutamate is first activated by ATP to form Glu-AMP and then transferred to the acceptor end of tRNA(Glu). The sequence is that of Glutamate--tRNA ligase 1 from Bartonella tribocorum (strain CIP 105476 / IBS 506).